The sequence spans 79 residues: MORN repeat-containing protein 2 (79 aa).

MORN repeat units follow at residues 15–36 and 38–55; these read YEGQ…PNGA and YTGN…EYTD.

The protein resides in the cytoplasmic vesicle. It is found in the secretory vesicle. The protein localises to the acrosome. Its subcellular location is the nucleus. In terms of biological role, might have a role in spermatogenesis. This is MORN repeat-containing protein 2 from Homo sapiens (Human).